The following is a 130-amino-acid chain: Small ribosomal subunit protein uS11 (130 aa).

A disordered region spans residues 108–130; sequence IEDVTPIPHDGTGRPGGKRGRRV.

It belongs to the universal ribosomal protein uS11 family. Part of the 30S ribosomal subunit.

In terms of biological role, located on the platform of the 30S subunit. This Methanothermobacter thermautotrophicus (strain ATCC 29096 / DSM 1053 / JCM 10044 / NBRC 100330 / Delta H) (Methanobacterium thermoautotrophicum) protein is Small ribosomal subunit protein uS11.